The sequence spans 145 residues: Mini-ribonuclease 3 (145 aa).

Residue Asp27 is part of the active site.

This sequence belongs to the MrnC RNase family. Homodimer. Requires Mg(2+) as cofactor.

Its subcellular location is the cytoplasm. Its function is as follows. Involved in correct processing of both the 5' and 3' ends of 23S rRNA precursor. Processes 30S rRNA precursor transcript even in absence of ribonuclease 3 (Rnc); Rnc processes 30S rRNA into smaller rRNA precursors. In Kosmotoga olearia (strain ATCC BAA-1733 / DSM 21960 / TBF 19.5.1), this protein is Mini-ribonuclease 3.